A 431-amino-acid chain; its full sequence is Metal-binding activator 1 (431 aa).

A DNA-binding region (copper-fist) is located at residues 1–40; sequence MILIDDIKYACMECVRGHRSSSCKHHERPLLQVRSKGRPG. The Zn(2+) site is built by C11, C14, C23, and H25.

The protein resides in the nucleus. In terms of biological role, copper ion-sensing transcription factor which activates transcription of the CTR1 copper transporter under low-copper conditions. Promotes filamentous and invasive growth. The chain is Metal-binding activator 1 (MAC1) from Candida albicans (strain SC5314 / ATCC MYA-2876) (Yeast).